We begin with the raw amino-acid sequence, 499 residues long: Probable cytosol aminopeptidase (499 aa).

The Mn(2+) site is built by K271 and D276. K283 is a catalytic residue. D294, D353, and E355 together coordinate Mn(2+). The active site involves R357.

It belongs to the peptidase M17 family. Mn(2+) serves as cofactor.

Its subcellular location is the cytoplasm. The enzyme catalyses Release of an N-terminal amino acid, Xaa-|-Yaa-, in which Xaa is preferably Leu, but may be other amino acids including Pro although not Arg or Lys, and Yaa may be Pro. Amino acid amides and methyl esters are also readily hydrolyzed, but rates on arylamides are exceedingly low.. It catalyses the reaction Release of an N-terminal amino acid, preferentially leucine, but not glutamic or aspartic acids.. In terms of biological role, presumably involved in the processing and regular turnover of intracellular proteins. Catalyzes the removal of unsubstituted N-terminal amino acids from various peptides. This chain is Probable cytosol aminopeptidase, found in Bordetella parapertussis (strain 12822 / ATCC BAA-587 / NCTC 13253).